Reading from the N-terminus, the 550-residue chain is Chaperonin GroEL (550 aa).

ATP-binding positions include threonine 30 to proline 33, lysine 51, aspartate 87 to threonine 91, glycine 415, asparagine 478 to alanine 480, and aspartate 494.

This sequence belongs to the chaperonin (HSP60) family. Forms a cylinder of 14 subunits composed of two heptameric rings stacked back-to-back. Interacts with the co-chaperonin GroES.

It is found in the cytoplasm. The catalysed reaction is ATP + H2O + a folded polypeptide = ADP + phosphate + an unfolded polypeptide.. In terms of biological role, together with its co-chaperonin GroES, plays an essential role in assisting protein folding. The GroEL-GroES system forms a nano-cage that allows encapsulation of the non-native substrate proteins and provides a physical environment optimized to promote and accelerate protein folding. The protein is Chaperonin GroEL of Desulfosudis oleivorans (strain DSM 6200 / JCM 39069 / Hxd3) (Desulfococcus oleovorans).